The following is a 269-amino-acid chain: tRNA (guanine-N(1)-)-methyltransferase (269 aa).

S-adenosyl-L-methionine is bound by residues G115 and 139–144 (LGDYVL).

The protein belongs to the RNA methyltransferase TrmD family. As to quaternary structure, homodimer.

The protein resides in the cytoplasm. It carries out the reaction guanosine(37) in tRNA + S-adenosyl-L-methionine = N(1)-methylguanosine(37) in tRNA + S-adenosyl-L-homocysteine + H(+). Its function is as follows. Specifically methylates guanosine-37 in various tRNAs. This is tRNA (guanine-N(1)-)-methyltransferase from Pseudarthrobacter chlorophenolicus (strain ATCC 700700 / DSM 12829 / CIP 107037 / JCM 12360 / KCTC 9906 / NCIMB 13794 / A6) (Arthrobacter chlorophenolicus).